The chain runs to 893 residues: Protein FAM186B (893 aa).

Disordered stretches follow at residues 177 to 207 (GWQG…TMNT), 327 to 376 (QAED…PSPM), 537 to 557 (LEKE…DVER), 574 to 611 (LSLV…QRPM), and 806 to 827 (KPKK…GPTY). Polar residues-rich tracts occupy residues 179–188 (QGRSPQTSPS) and 197–207 (QMLQDQHTMNT). The stretch at 303–331 (RYHDLLLMKQALEFQLKKAQNATGQAEDL) forms a coiled coil. The span at 342 to 353 (SERETLPRKETV) shows a compositional bias: basic and acidic residues.

Belongs to the FAM186 family.

In Homo sapiens (Human), this protein is Protein FAM186B (FAM186B).